The chain runs to 563 residues: GTPase Obg (563 aa).

An Obg domain is found at 2 to 168 (SDFVDRVTVH…RDVILELKSI (167 aa)). The OBG-type G domain occupies 169–349 (ADVALVGFPS…LNFALSALVH (181 aa)). Residues 175 to 182 (GFPSAGKS), 200 to 204 (FTTLV), 221 to 224 (DVPG), 301 to 304 (NKID), and 330 to 332 (STA) contribute to the GTP site. Mg(2+) is bound by residues Ser-182 and Thr-202. The OCT domain occupies 383-469 (DEGGSALEFT…ARMVEFDWDP (87 aa)). Disordered regions lie at residues 478–509 (LDGSNLGARGKDLRLEEQDPRTHRRSNAERRA) and 528–563 (ERKAGHWADPTVDDDRHDENSLFGHGESSEDGETEE). A compositionally biased stretch (basic and acidic residues) spans 486-509 (RGKDLRLEEQDPRTHRRSNAERRA).

The protein belongs to the TRAFAC class OBG-HflX-like GTPase superfamily. OBG GTPase family. In terms of assembly, monomer. Requires Mg(2+) as cofactor.

It localises to the cytoplasm. In terms of biological role, an essential GTPase which binds GTP, GDP and possibly (p)ppGpp with moderate affinity, with high nucleotide exchange rates and a fairly low GTP hydrolysis rate. Plays a role in control of the cell cycle, stress response, ribosome biogenesis and in those bacteria that undergo differentiation, in morphogenesis control. The chain is GTPase Obg from Bifidobacterium longum subsp. infantis (strain ATCC 15697 / DSM 20088 / JCM 1222 / NCTC 11817 / S12).